The chain runs to 311 residues: Ornithine carbamoyltransferase (311 aa).

Carbamoyl phosphate-binding positions include 56 to 59 (STRT), Gln-83, Arg-107, and 134 to 137 (HPTQ). L-ornithine-binding positions include Asn-166, Asp-230, and 234-235 (SM). Carbamoyl phosphate contacts are provided by residues 270–271 (CL) and Lys-298.

The protein belongs to the aspartate/ornithine carbamoyltransferase superfamily. OTCase family.

Its subcellular location is the cytoplasm. The enzyme catalyses carbamoyl phosphate + L-ornithine = L-citrulline + phosphate + H(+). It functions in the pathway amino-acid degradation; L-arginine degradation via ADI pathway; carbamoyl phosphate from L-arginine: step 2/2. In terms of biological role, reversibly catalyzes the transfer of the carbamoyl group from carbamoyl phosphate (CP) to the N(epsilon) atom of ornithine (ORN) to produce L-citrulline. This Ignicoccus hospitalis (strain KIN4/I / DSM 18386 / JCM 14125) protein is Ornithine carbamoyltransferase.